Consider the following 960-residue polypeptide: Endoplasmic reticulum aminopeptidase 2 (960 aa).

The Cytoplasmic portion of the chain corresponds to 1 to 20 (MFHSSAMVNSHRKPMFNIHR). A helical; Signal-anchor for type II membrane protein membrane pass occupies residues 21 to 40 (GFYCLTAILPQICICSQFSV). The Lumenal portion of the chain corresponds to 41-960 (PSSYHFTEDP…TLRTWLMVNT (920 aa)). 2 N-linked (GlcNAc...) asparagine glycosylation sites follow: asparagine 85 and asparagine 119. Position 200 (glutamate 200) interacts with substrate. N-linked (GlcNAc...) asparagine glycosylation occurs at asparagine 219. Position 334–338 (334–338 (GAMEN)) interacts with substrate. Histidine 370 provides a ligand contact to Zn(2+). Glutamate 371 functions as the Proton acceptor in the catalytic mechanism. 2 residues coordinate Zn(2+): histidine 374 and glutamate 393. A glycan (N-linked (GlcNAc...) asparagine) is linked at asparagine 405. Residues cysteine 421 and cysteine 460 are joined by a disulfide bond. N-linked (GlcNAc...) asparagine glycosylation occurs at asparagine 650. Cysteine 759 and cysteine 766 are joined by a disulfide.

It belongs to the peptidase M1 family. As to quaternary structure, heterodimer with ERAP1. Zn(2+) serves as cofactor. In terms of processing, N-glycosylated. Ubiquitously expressed. Highly expressed in spleen and leukocytes.

It localises to the endoplasmic reticulum membrane. Its function is as follows. Aminopeptidase that plays a central role in peptide trimming, a step required for the generation of most HLA class I-binding peptides. Peptide trimming is essential to customize longer precursor peptides to fit them to the correct length required for presentation on MHC class I molecules. Preferentially hydrolyzes the basic residues Arg and Lys. This is Endoplasmic reticulum aminopeptidase 2 (ERAP2) from Homo sapiens (Human).